Consider the following 550-residue polypeptide: Mycosin-2 (550 aa).

The signal sequence occupies residues 1–33 (MASPLNRPGLRAAAASAALTLVALSANVPAAQA). Residues 34–62 (IPPPSVDPAMVPADARPGPDQPMRRSNSC) form a disordered region. Residues 79 to 490 (GFNLVNISKA…YGLVDPVAAL (412 aa)) enclose the Peptidase S8 domain. Catalysis depends on charge relay system residues D103 and H133. Positions 168–190 (PPVTAAPAPPVEVPPPMPPPPPV) are enriched in pro residues. The disordered stretch occupies residues 168-236 (PPVTAAPAPP…PPPPPGAPDG (69 aa)). The active-site Charge relay system is S435. A helical membrane pass occupies residues 524–544 (NIAIGFVGAVATGVLAMAIGA).

This sequence belongs to the peptidase S8 family.

Its subcellular location is the cell membrane. The chain is Mycosin-2 from Mycobacterium tuberculosis (strain ATCC 25618 / H37Rv).